We begin with the raw amino-acid sequence, 152 residues long: Succinate dehydrogenase [ubiquinone] cytochrome b small subunit B, mitochondrial (152 aa).

The transit peptide at 1–21 (MATLLRVSSLCRANRASAFKS) directs the protein to the mitochondrion. The Mitochondrial matrix segment spans residues 22-56 (LLIRPLPCLSQDLHMVQTSQIHTSPNHHAGSKAAS). Residues 57-78 (MHWTGERALSVALLGLLPAAYL) form a helical membrane-spanning segment. At 79–83 (YPGAA) the chain is on the mitochondrial intermembrane side. Residues 84–104 (MDYSLAAALTLHGHWGLGQVV) form a helical membrane-spanning segment. Residue histidine 95 participates in heme b binding. Residues 105–113 (TDYVHGETK) lie on the Mitochondrial matrix side of the membrane. A ubiquinone is bound at residue tyrosine 107. The chain crosses the membrane as a helical span at residues 114–135 (IKMANTSLFALSALTFAGLCYF). The Mitochondrial intermembrane portion of the chain corresponds to 136–152 (NYHDVGICKAVAMLWSL).

It belongs to the CybS family. As to quaternary structure, component of complex II composed of four subunits: the flavoprotein (FP) SDHA, iron-sulfur protein (IP) SDHB, and a cytochrome b560 composed of SDHC and SDHD.

Its subcellular location is the mitochondrion inner membrane. It participates in carbohydrate metabolism; tricarboxylic acid cycle. Membrane-anchoring subunit of succinate dehydrogenase (SDH) that is involved in complex II of the mitochondrial electron transport chain and is responsible for transferring electrons from succinate to ubiquinone (coenzyme Q). SDH also oxidizes malate to the non-canonical enol form of oxaloacetate, enol-oxaloacetate. Enol-oxaloacetate, which is a potent inhibitor of the succinate dehydrogenase activity, is further isomerized into keto-oxaloacetate. This Xenopus laevis (African clawed frog) protein is Succinate dehydrogenase [ubiquinone] cytochrome b small subunit B, mitochondrial (sdhd-b).